A 433-amino-acid chain; its full sequence is 3-phosphoshikimate 1-carboxyvinyltransferase (433 aa).

3 residues coordinate 3-phosphoshikimate: K23, S24, and R28. K23 provides a ligand contact to phosphoenolpyruvate. Residues G95 and R123 each contribute to the phosphoenolpyruvate site. 3-phosphoshikimate contacts are provided by S170, S171, Q172, S198, D317, and K344. Q172 is a binding site for phosphoenolpyruvate. The active-site Proton acceptor is the D317. 3 residues coordinate phosphoenolpyruvate: R348, R391, and K416.

This sequence belongs to the EPSP synthase family. As to quaternary structure, monomer.

The protein resides in the cytoplasm. The catalysed reaction is 3-phosphoshikimate + phosphoenolpyruvate = 5-O-(1-carboxyvinyl)-3-phosphoshikimate + phosphate. It participates in metabolic intermediate biosynthesis; chorismate biosynthesis; chorismate from D-erythrose 4-phosphate and phosphoenolpyruvate: step 6/7. In terms of biological role, catalyzes the transfer of the enolpyruvyl moiety of phosphoenolpyruvate (PEP) to the 5-hydroxyl of shikimate-3-phosphate (S3P) to produce enolpyruvyl shikimate-3-phosphate and inorganic phosphate. In Neisseria meningitidis serogroup B (strain ATCC BAA-335 / MC58), this protein is 3-phosphoshikimate 1-carboxyvinyltransferase.